The primary structure comprises 454 residues: UPF0210 protein Blon_2054/BLIJ_2131 (454 aa).

The protein belongs to the UPF0210 family. As to quaternary structure, homodimer.

The sequence is that of UPF0210 protein Blon_2054/BLIJ_2131 from Bifidobacterium longum subsp. infantis (strain ATCC 15697 / DSM 20088 / JCM 1222 / NCTC 11817 / S12).